Here is a 478-residue protein sequence, read N- to C-terminus: MQIQNLIAALAGMAVVAEASVTFLDSPLSAALAKRQNKGGNNNNNNNNNNNNNNNNNKNNGGNNQLCLNPNNVQKGSQQAGTPKQGQANSAVDQANFINFCTGQQLTNGEQKTAGSCNGVVMGKIPSQNNMVSTIIKNPPPGGNLQANQQFNVQLKVNNLQAGSFTDAQSTYYSAPQDTNGAGNIIGHVHVTIQDMGNSLTPQNALDPKQFVFFKGIDDAGDGKGNLQATVTGGLPAGNYRVCTMSSASNHQPVLMPVAQRGAQDDCNKFTVGGNGGNGGNGGNGGNGGNGGNGGNGGNGGKNAAVNSGNADNGGNNDGGGGGNDGGNNSANNSGSGNKQGGKQQNGASTGGFPGTSNQFPGKTGTGSGAQTGNANTKTQAGGSASNSATNGNSGTGGKGGATANAIGGIQAPAVTNSGDSSRPFAVNGNTFVNKAAAVQRACDIQRNGCFDAINRGKLTGSTADCDAQLQTCTQQLS.

The signal sequence occupies residues 1–19; sequence MQIQNLIAALAGMAVVAEA. 2 disordered regions span residues 35-89 and 299-400; these read RQNK…GQAN and NGGK…GGKG. Positions 38–64 are enriched in low complexity; that stretch reads KGGNNNNNNNNNNNNNNNNNKNNGGNN. Polar residues predominate over residues 65–89; the sequence is QLCLNPNNVQKGSQQAGTPKQGQAN. Over residues 316-326 the composition is skewed to gly residues; sequence NNDGGGGGNDG. Composition is skewed to low complexity over residues 327 to 348 and 379 to 393; these read GNNS…QNGA and TQAG…TNGN. 2 N-linked (GlcNAc...) asparagine glycosylation sites follow: N328 and N332.

It localises to the secreted. Secreted protein required for appressorial penetration of intact host epidermal cells and for pathogenicit, but not for subsequent biotrophic and necrotrophic colonization of leaves. The polypeptide is Pathogenicity cluster 5 protein d (Colletotrichum graminicola (strain M1.001 / M2 / FGSC 10212) (Maize anthracnose fungus)).